The primary structure comprises 360 residues: Ribosomal RNA large subunit methyltransferase M (360 aa).

Residues Ser192, 225-228 (APGG), Asp244, Asp264, and Asp280 each bind S-adenosyl-L-methionine. The Proton acceptor role is filled by Lys309.

The protein belongs to the class I-like SAM-binding methyltransferase superfamily. RNA methyltransferase RlmE family. RlmM subfamily. As to quaternary structure, monomer.

The protein resides in the cytoplasm. The catalysed reaction is cytidine(2498) in 23S rRNA + S-adenosyl-L-methionine = 2'-O-methylcytidine(2498) in 23S rRNA + S-adenosyl-L-homocysteine + H(+). Functionally, catalyzes the 2'-O-methylation at nucleotide C2498 in 23S rRNA. The polypeptide is Ribosomal RNA large subunit methyltransferase M (Alkalilimnicola ehrlichii (strain ATCC BAA-1101 / DSM 17681 / MLHE-1)).